We begin with the raw amino-acid sequence, 443 residues long: Ribosomal protein uS12 methylthiotransferase RimO (443 aa).

The region spanning 8-118 (PKVGFVSLGC…VVNAVHEVVP (111 aa)) is the MTTase N-terminal domain. Residues C17, C53, C82, C151, C155, and C158 each contribute to the [4Fe-4S] cluster site. A Radical SAM core domain is found at 137-375 (LTPRHYAYLK…MAHQQAISAA (239 aa)). The region spanning 378–443 (QLRIGKEIDV…DEYDMWAEPI (66 aa)) is the TRAM domain.

This sequence belongs to the methylthiotransferase family. RimO subfamily. It depends on [4Fe-4S] cluster as a cofactor.

The protein resides in the cytoplasm. It carries out the reaction L-aspartate(89)-[ribosomal protein uS12]-hydrogen + (sulfur carrier)-SH + AH2 + 2 S-adenosyl-L-methionine = 3-methylsulfanyl-L-aspartate(89)-[ribosomal protein uS12]-hydrogen + (sulfur carrier)-H + 5'-deoxyadenosine + L-methionine + A + S-adenosyl-L-homocysteine + 2 H(+). Its function is as follows. Catalyzes the methylthiolation of an aspartic acid residue of ribosomal protein uS12. This chain is Ribosomal protein uS12 methylthiotransferase RimO, found in Pseudomonas putida (strain ATCC 700007 / DSM 6899 / JCM 31910 / BCRC 17059 / LMG 24140 / F1).